The sequence spans 264 residues: Rhamnosyltransferase WbbL (264 aa).

Belongs to the glycosyltransferase 2 family.

It functions in the pathway bacterial outer membrane biogenesis; lipopolysaccharide biosynthesis. Functionally, rhamnosyltransferase involved in lipopolysaccharide biosynthesis. The sequence is that of Rhamnosyltransferase WbbL (wbbL) from Escherichia coli (strain K12).